A 359-amino-acid chain; its full sequence is Peptide chain release factor 1 (359 aa).

Gln235 bears the N5-methylglutamine mark. The segment covering Arg282–Arg307 has biased composition (basic and acidic residues). The tract at residues Arg282–Tyr309 is disordered.

The protein belongs to the prokaryotic/mitochondrial release factor family. Methylated by PrmC. Methylation increases the termination efficiency of RF1.

Its subcellular location is the cytoplasm. Its function is as follows. Peptide chain release factor 1 directs the termination of translation in response to the peptide chain termination codons UAG and UAA. The chain is Peptide chain release factor 1 from Allorhizobium ampelinum (strain ATCC BAA-846 / DSM 112012 / S4) (Agrobacterium vitis (strain S4)).